A 206-amino-acid chain; its full sequence is Holliday junction branch migration complex subunit RuvA (206 aa).

The interval 1 to 64 (MIGRLSGTIL…EDAQLLYGFN (64 aa)) is domain I. The segment at 65 to 143 (KKSERELFRE…GWGEGDLFTP (79 aa)) is domain II. The flexible linker stretch occupies residues 144–157 (ASDAAASNAEIQKY). Residues 158–206 (SSARAEDEAVSALIALGYKALQAAKVVSQVVKPEMSSENIIREALRSMV) are domain III.

The protein belongs to the RuvA family. In terms of assembly, homotetramer. Forms an RuvA(8)-RuvB(12)-Holliday junction (HJ) complex. HJ DNA is sandwiched between 2 RuvA tetramers; dsDNA enters through RuvA and exits via RuvB. An RuvB hexamer assembles on each DNA strand where it exits the tetramer. Each RuvB hexamer is contacted by two RuvA subunits (via domain III) on 2 adjacent RuvB subunits; this complex drives branch migration. In the full resolvosome a probable DNA-RuvA(4)-RuvB(12)-RuvC(2) complex forms which resolves the HJ.

The protein resides in the cytoplasm. Functionally, the RuvA-RuvB-RuvC complex processes Holliday junction (HJ) DNA during genetic recombination and DNA repair, while the RuvA-RuvB complex plays an important role in the rescue of blocked DNA replication forks via replication fork reversal (RFR). RuvA specifically binds to HJ cruciform DNA, conferring on it an open structure. The RuvB hexamer acts as an ATP-dependent pump, pulling dsDNA into and through the RuvAB complex. HJ branch migration allows RuvC to scan DNA until it finds its consensus sequence, where it cleaves and resolves the cruciform DNA. The chain is Holliday junction branch migration complex subunit RuvA from Photobacterium profundum (strain SS9).